Consider the following 259-residue polypeptide: Putative deoxyribonuclease TATDN1 homolog (259 aa).

Residues glutamate 82, histidine 116, histidine 138, and aspartate 186 each coordinate a divalent metal cation.

It belongs to the metallo-dependent hydrolases superfamily. TatD-type hydrolase family. It depends on a divalent metal cation as a cofactor.

It localises to the nucleus. Its function is as follows. Putative deoxyribonuclease. This is Putative deoxyribonuclease TATDN1 homolog from Vairimorpha ceranae (strain BRL01) (Microsporidian parasite).